The sequence spans 410 residues: Arginine deiminase (410 aa).

Cys-399 acts as the Amidino-cysteine intermediate in catalysis.

Belongs to the arginine deiminase family.

The protein localises to the cytoplasm. It catalyses the reaction L-arginine + H2O = L-citrulline + NH4(+). Its pathway is amino-acid degradation; L-arginine degradation via ADI pathway; carbamoyl phosphate from L-arginine: step 1/2. The protein is Arginine deiminase of Treponema denticola (strain ATCC 35405 / DSM 14222 / CIP 103919 / JCM 8153 / KCTC 15104).